Here is a 337-residue protein sequence, read N- to C-terminus: 2-oxoglutarate receptor 1 (337 aa).

The Extracellular segment spans residues 1-37; it reads MIETLDSPANDSDFLDYITALENCTDEQISFKMQYLP. The N-linked (GlcNAc...) asparagine glycan is linked to asparagine 23. Residues 38-58 traverse the membrane as a helical segment; the sequence is VIYSIIFLVGFPGNTVAISIY. Residues 59 to 69 are Cytoplasmic-facing; it reads VFKMRPWKSST. Residues 70-90 form a helical membrane-spanning segment; it reads IIMLNLALTDLLYLTSLPFLI. The Extracellular portion of the chain corresponds to 91–116; that stretch reads HYYASGENWIFGDFMCKFIRFGFHFN. A disulfide bridge links cysteine 106 with cysteine 183. A helical membrane pass occupies residues 117–137; the sequence is LYSSILFLTCFSLFRYIVIIH. Topologically, residues 138–151 are cytoplasmic; sequence PMSCFSIQKTRWAV. Residues 152–172 traverse the membrane as a helical segment; that stretch reads VACAGVWVISLVAVMPMTFLI. The Extracellular portion of the chain corresponds to 173 to 200; the sequence is TSTTRTNRSACLDLTSSDDLTTIKWYNL. The chain crosses the membrane as a helical span at residues 201 to 221; it reads ILTATTFCLPLLIVTLCYTTI. Topologically, residues 222–242 are cytoplasmic; it reads ISTLTHGPRTHSCFKQKARRL. A helical transmembrane segment spans residues 243 to 263; that stretch reads TILLLLVFYVCFLPFHILRVI. Over 264 to 284 the chain is Extracellular; sequence RIESRLLSISCSIESHIHEAY. Residues 285–305 form a helical membrane-spanning segment; that stretch reads IVSRPLAALNTFGNLLLYVVV. The Cytoplasmic segment spans residues 306–337; sequence SNNFQQAFCSAVRCKAIGDLEQAKKDSCSNNP.

It belongs to the G-protein coupled receptor 1 family. In terms of tissue distribution, highly expressed in mast cells and is found predominantly in the tissues of the respiratory tract and kidneys.

The protein resides in the cell membrane. Functionally, g protein-coupled receptor for dicarboxylates and amino dicarboxylates. Receptor for itaconate, a metabolite produced by myeloid lineages. In the respiratory epithelium, couples the binding of itaconate to the activation of GNA11 and downstream intracellular Ca(2+) release, leading to mucocilliary clearance of airborne pathogens. Receptor for leukotriene E4 (LTE4) produced by mast cells upon allergic inflammation. Binds with high affinity to LTE4 and elicits mucin release from pulmonary epithelium in response to airborne fungi allergens. Regulates mucin-producing goblet cell homeostasis. Receptor for alpha-ketoglutarate produced by proximal tubule renal cells upon metabolic alkalosis. In an intrarenal paracrine signaling pathway, binds alpha-ketoglutarate and drives transepithelial salt reabsorption and bicarbonate secretion by SLC26A4/pendrin-positive intercalated cells. This is 2-oxoglutarate receptor 1 (Oxgr1) from Rattus norvegicus (Rat).